Reading from the N-terminus, the 627-residue chain is CTP synthase (627 aa).

Residues C300–Y554 form the Glutamine amidotransferase type-1 domain. Catalysis depends on for GATase activity residues C399, H526, and E528. Phosphoserine occurs at positions 567, 570, 571, and 588. Position 595 is a phosphothreonine (T595). The segment covering G599–S613 has biased composition (polar residues). Positions G599 to K627 are disordered.

The protein belongs to the CTP synthase family. As to expression, in ovary, expressed in oocytes, follicle cells and nurse cells. Also expressed in larval and adult testis (at protein level). In larvae, expressed in lymph gland, salivary gland, regions of the midgut, testis, optical lobe and trachea. Isoform 1 is expressed in adult testis, ovary, accessory gland and head. Isoform 2 is weakly expressed in ovary.

It localises to the cytoplasm. The catalysed reaction is UTP + L-glutamine + ATP + H2O = CTP + L-glutamate + ADP + phosphate + 2 H(+). It functions in the pathway pyrimidine metabolism; CTP biosynthesis via de novo pathway; CTP from UDP: step 2/2. Catalyzes the ATP-dependent amination of UTP to CTP with either L-glutamine or ammonia as the source of nitrogen. Constitutes the rate-limiting enzyme in the synthesis of cytosine nucleotides. In terms of biological role, required for assembly of cytoophidium in female germline cells. In nurse cells, CTPsyn filament assembly in the cytoophidium is regulated by Ack kinase which may thereby contribute to the control of CTP production at specific stages of oogenesis and development of the nurse cell membrane. The protein is CTP synthase of Drosophila melanogaster (Fruit fly).